The primary structure comprises 279 residues: DegV domain-containing protein CA_C0701 (279 aa).

Residues 4–277 (IKIVTDSTCD…TKACGVFFIE (274 aa)) form the DegV domain. Hexadecanoate is bound by residues threonine 62 and serine 94.

Functionally, may bind long-chain fatty acids, such as palmitate, and may play a role in lipid transport or fatty acid metabolism. This chain is DegV domain-containing protein CA_C0701, found in Clostridium acetobutylicum (strain ATCC 824 / DSM 792 / JCM 1419 / IAM 19013 / LMG 5710 / NBRC 13948 / NRRL B-527 / VKM B-1787 / 2291 / W).